Consider the following 163-residue polypeptide: MPSFDIVSEITMHEVNNAVENANRALSSRYDFRGVEAVIELNEKNETVKVTTESDFQLEQLIEILIGACVKRGIDSTSLDIPAESEHHGKLYSKEIKLKQGIETEIAKKITKLIKDSKLKVQTQIQGEQVRVTGKSRDDLQSVIQLVKGADLGQPFQFNNFRD.

Belongs to the YajQ family.

Its function is as follows. Nucleotide-binding protein. This Actinobacillus succinogenes (strain ATCC 55618 / DSM 22257 / CCUG 43843 / 130Z) protein is Nucleotide-binding protein Asuc_2113.